A 453-amino-acid chain; its full sequence is Trigger factor (453 aa).

In terms of domain architecture, PPIase FKBP-type spans 171–256; sequence GDRVTISFKG…ASLIEAPQDI (86 aa).

Belongs to the FKBP-type PPIase family. Tig subfamily.

Its subcellular location is the cytoplasm. The catalysed reaction is [protein]-peptidylproline (omega=180) = [protein]-peptidylproline (omega=0). Functionally, involved in protein export. Acts as a chaperone by maintaining the newly synthesized protein in an open conformation. Functions as a peptidyl-prolyl cis-trans isomerase. In Nitrobacter hamburgensis (strain DSM 10229 / NCIMB 13809 / X14), this protein is Trigger factor.